Here is a 271-residue protein sequence, read N- to C-terminus: Metal-staphylopine import system ATP-binding protein CntD (271 aa).

An ABC transporter domain is found at 6 to 251; that stretch reads VKHLTITDTW…PEHVYTKYLL (246 aa). 38 to 45 serves as a coordination point for ATP; the sequence is GESGSGKS.

The protein belongs to the ABC transporter superfamily. The complex is composed of two ATP-binding proteins (CntD and CntF), two transmembrane proteins (CntB and CntC) and a solute-binding protein (CntA).

The protein resides in the cell membrane. Its activity is regulated as follows. Nickel/cobalt import is reduced in the presence of zinc. Part of the ABC transporter complex CntABCDF (Opp1) involved in the uptake of metal in complex with the metallophore staphylopine (StP). Involved in the import of divalent metals ions such as nickel, cobalt and zinc. Probably responsible for energy coupling to the transport system. Plays a major role in nickel/cobalt import in zinc-depleted conditions. Contributes to virulence. Required for full urease activity in vitro. In Staphylococcus aureus (strain NCTC 8325 / PS 47), this protein is Metal-staphylopine import system ATP-binding protein CntD.